Consider the following 724-residue polypeptide: Probable protein phosphatase 2C 62 (724 aa).

The disordered stretch occupies residues D357–N385. The segment covering A365–A374 has biased composition (basic and acidic residues). A PPM-type phosphatase domain is found at D482–V719. Residues D514, G515, D643, and D710 each coordinate Mn(2+).

This sequence belongs to the PP2C family. It depends on Mg(2+) as a cofactor. Mn(2+) is required as a cofactor.

The enzyme catalyses O-phospho-L-seryl-[protein] + H2O = L-seryl-[protein] + phosphate. It carries out the reaction O-phospho-L-threonyl-[protein] + H2O = L-threonyl-[protein] + phosphate. The sequence is that of Probable protein phosphatase 2C 62 from Arabidopsis thaliana (Mouse-ear cress).